Here is a 186-residue protein sequence, read N- to C-terminus: GMP synthase [glutamine-hydrolyzing] subunit A (186 aa).

Positions Met-3–Ser-186 constitute a Glutamine amidotransferase type-1 domain. Catalysis depends on Cys-77, which acts as the Nucleophile. Catalysis depends on residues His-164 and Glu-166.

Heterodimer composed of a glutamine amidotransferase subunit (A) and a GMP-binding subunit (B).

The enzyme catalyses XMP + L-glutamine + ATP + H2O = GMP + L-glutamate + AMP + diphosphate + 2 H(+). Its pathway is purine metabolism; GMP biosynthesis; GMP from XMP (L-Gln route): step 1/1. In terms of biological role, catalyzes the synthesis of GMP from XMP. This chain is GMP synthase [glutamine-hydrolyzing] subunit A, found in Methanothermobacter thermautotrophicus (strain ATCC 29096 / DSM 1053 / JCM 10044 / NBRC 100330 / Delta H) (Methanobacterium thermoautotrophicum).